The following is a 717-amino-acid chain: PAN2-PAN3 deadenylation complex subunit PAN3 (717 aa).

Residues 8–37 form a C3H1-type zinc finger; that stretch reads WARDVPCRNVIIYGFCKKKTEGCPFKHDDD. A disordered region spans residues 37–100; it reads DDIATPTSTP…HTGSKSQVPK (64 aa). Residues 62–90 show a composition bias toward low complexity; that stretch reads PSKISVSSLPSLNSQPSSTAPTSAPNATA. Positions 91 to 100 are enriched in polar residues; it reads HTGSKSQVPK. Positions 323–585 are pseudokinase domain; sequence QLFPSGGNLP…ATIIEKYIGL (263 aa). ATP is bound by residues Arg378, 428-435, and 482-483; these read DYYPNATS and DK. A coiled-coil region spans residues 586–624; that stretch reads DVVFKVMEAQQTYSEYAENVLSRELENGRLFRLICKLNF. Positions 625-717 are knob domain; it reads IFGRVENRLD…VDKTFRAMTL (93 aa).

It belongs to the protein kinase superfamily. PAN3 family. Homodimer. Forms a heterotrimer with a catalytic subunit PAN2 to form the poly(A)-nuclease (PAN) deadenylation complex. Interacts (via PAM-2 motif) with poly(A)-binding protein PAB1 (via PABC domain), conferring substrate specificity of the enzyme complex.

The protein localises to the cytoplasm. Its function is as follows. Regulatory subunit of the poly(A)-nuclease (PAN) deadenylation complex, one of two cytoplasmic mRNA deadenylases involved in mRNA turnover. PAN specifically shortens poly(A) tails of RNA and the activity is stimulated by poly(A)-binding protein PAB1. PAN deadenylation is followed by rapid degradation of the shortened mRNA tails by the CCR4-NOT complex. Deadenylated mRNAs are then degraded by two alternative mechanisms, namely exosome-mediated 3'-5' exonucleolytic degradation, or deadenylation-dependent mRNA decaping and subsequent 5'-3' exonucleolytic degradation by XRN1. May also be involved in post-transcriptional maturation of mRNA poly(A) tails. PAN3 acts as a positive regulator for PAN activity, recruiting the catalytic subunit PAN2 to mRNA via its interaction with RNA and with PAB1. The polypeptide is PAN2-PAN3 deadenylation complex subunit PAN3 (Candida glabrata (strain ATCC 2001 / BCRC 20586 / JCM 3761 / NBRC 0622 / NRRL Y-65 / CBS 138) (Yeast)).